Here is a 389-residue protein sequence, read N- to C-terminus: Gustatory receptor for bitter taste 22e (389 aa).

The Cytoplasmic segment spans residues 1 to 14 (MFRPSGSGYRQKWT). A helical transmembrane segment spans residues 15-35 (GLTLKGALYGSWILGVFPFAY). Residues 36–46 (DSWTRTLRRSK) lie on the Extracellular side of the membrane. Residues 47–67 (WLIAYGFVLNAAFILLVVTND) traverse the membrane as a helical segment. At 68–142 (TESETPLRME…SLEECISFDR (75 aa)) the chain is on the cytoplasmic side. A helical transmembrane segment spans residues 143 to 163 (FVLYKGFSVVLELVSMLVLEL). Over 164-170 (GMSPNYS) the chain is Extracellular. An N-linked (GlcNAc...) asparagine glycan is attached at N168. A helical membrane pass occupies residues 171–191 (AQFFIGLGSLCLMLLAVLLGA). Over 192-254 (SHFHLAVVFV…QRLASIYDYQ (63 aa)) the chain is Cytoplasmic. Residues 255 to 275 (MVMVMVSFLIANVLGIYFFII) form a helical membrane-spanning segment. Topologically, residues 276 to 287 (YSISLNKSLDFK) are extracellular. A glycan (N-linked (GlcNAc...) asparagine) is linked at N281. A helical membrane pass occupies residues 288 to 308 (ILVFVQALVINMLDFWLNVEI). The Cytoplasmic portion of the chain corresponds to 309 to 366 (CELAERTGRQTSTILKLFNDIENIDEKLERSITDFALFCSHRRLRFHHCGLFYVNYEM). Residues 367 to 387 (GFRMAITSFLYLLFLIQFDYW) form a helical membrane-spanning segment. At 388 to 389 (NL) the chain is on the extracellular side.

Belongs to the insect chemoreceptor superfamily. Gustatory receptor (GR) family. Gr22e subfamily. In terms of tissue distribution, taste bristles on the labial palp, labral and cibarial sense organs, chemosensory bristles on the leg and anterior wing margin. In larvae, is expressed in neurons of the terminal external chemosensory organ and in the dorsal pharyngeal sense organ. Neurons expressing Gr22e also express Gr66a and correspond to taste neurons that mediate sensitivity to bitter compounds.

The protein localises to the cell membrane. Its function is as follows. Gustatory receptor which mediates acceptance or avoidance behavior, depending on its substrates. Seems to be involved in the sensing of bitter taste since it is expressed in neurons that mediate sensitivity to bitter compounds which are also avoidance-type taste neurons. This Drosophila melanogaster (Fruit fly) protein is Gustatory receptor for bitter taste 22e (Gr22e).